Here is an 872-residue protein sequence, read N- to C-terminus: Alanine--tRNA ligase (872 aa).

Histidine 567, histidine 571, cysteine 669, and histidine 673 together coordinate Zn(2+).

This sequence belongs to the class-II aminoacyl-tRNA synthetase family. Requires Zn(2+) as cofactor.

It is found in the cytoplasm. It catalyses the reaction tRNA(Ala) + L-alanine + ATP = L-alanyl-tRNA(Ala) + AMP + diphosphate. Catalyzes the attachment of alanine to tRNA(Ala) in a two-step reaction: alanine is first activated by ATP to form Ala-AMP and then transferred to the acceptor end of tRNA(Ala). Also edits incorrectly charged Ser-tRNA(Ala) and Gly-tRNA(Ala) via its editing domain. The chain is Alanine--tRNA ligase from Streptococcus pneumoniae (strain CGSP14).